Here is a 141-residue protein sequence, read N- to C-terminus: Calcium-binding protein SPEC 2D (141 aa).

EF-hand domains lie at 10–42 (DQIK…MKSV), 43–72 (GHVL…AMIL), 73–107 (DKKC…FDRQ), and 108–141 (ITED…MNFC). Ca(2+) contacts are provided by Asp-23, Asn-25, Asp-27, and Asn-29. Residues Asp-84, Asp-86, Lys-90, Asp-95, Asp-121, Asp-125, Lys-127, and Glu-132 each coordinate Ca(2+).

As to expression, found in cell lineages giving rise to the aboral ectoderm, a squamous epithelium covering the surface of the late stage embryo and larva.

Functionally, calcium-binding protein involved in larval development and metamorphosis. Likely to function as calcium buffers mediating the transport of calcium from the sea water to the blastocoel where calcium is required for skeleton formation. This chain is Calcium-binding protein SPEC 2D (SPEC2D), found in Strongylocentrotus purpuratus (Purple sea urchin).